Consider the following 258-residue polypeptide: 5'-nucleotidase SurE (258 aa).

A divalent metal cation is bound by residues Asp9, Asp10, Ser42, and Asn96.

This sequence belongs to the SurE nucleotidase family. Requires a divalent metal cation as cofactor.

The protein localises to the cytoplasm. The catalysed reaction is a ribonucleoside 5'-phosphate + H2O = a ribonucleoside + phosphate. Its function is as follows. Nucleotidase that shows phosphatase activity on nucleoside 5'-monophosphates. The chain is 5'-nucleotidase SurE from Campylobacter jejuni subsp. jejuni serotype O:23/36 (strain 81-176).